The primary structure comprises 425 residues: Serine--tRNA ligase (425 aa).

233–235 (TAE) is a binding site for L-serine. 264 to 266 (RAE) is a binding site for ATP. L-serine is bound at residue glutamate 287. Position 351-354 (351-354 (EISS)) interacts with ATP. An L-serine-binding site is contributed by serine 387.

Belongs to the class-II aminoacyl-tRNA synthetase family. Type-1 seryl-tRNA synthetase subfamily. In terms of assembly, homodimer. The tRNA molecule binds across the dimer.

The protein resides in the cytoplasm. The enzyme catalyses tRNA(Ser) + L-serine + ATP = L-seryl-tRNA(Ser) + AMP + diphosphate + H(+). It catalyses the reaction tRNA(Sec) + L-serine + ATP = L-seryl-tRNA(Sec) + AMP + diphosphate + H(+). It functions in the pathway aminoacyl-tRNA biosynthesis; selenocysteinyl-tRNA(Sec) biosynthesis; L-seryl-tRNA(Sec) from L-serine and tRNA(Sec): step 1/1. Functionally, catalyzes the attachment of serine to tRNA(Ser). Is also able to aminoacylate tRNA(Sec) with serine, to form the misacylated tRNA L-seryl-tRNA(Sec), which will be further converted into selenocysteinyl-tRNA(Sec). The chain is Serine--tRNA ligase from Clostridium perfringens (strain 13 / Type A).